The following is a 293-amino-acid chain: Shikimate dehydrogenase (NADP(+)) (293 aa).

Shikimate is bound by residues 26–28 and threonine 73; that span reads SKS. Lysine 77 (proton acceptor) is an active-site residue. Position 89 (glutamate 89) interacts with NADP(+). Residues asparagine 98 and aspartate 113 each contribute to the shikimate site. Residues 137–141, 161–166, and isoleucine 231 contribute to the NADP(+) site; these read GAGGA and NRTRQR. A shikimate-binding site is contributed by tyrosine 233. Residue glycine 254 participates in NADP(+) binding.

The protein belongs to the shikimate dehydrogenase family. As to quaternary structure, homodimer.

It catalyses the reaction shikimate + NADP(+) = 3-dehydroshikimate + NADPH + H(+). It functions in the pathway metabolic intermediate biosynthesis; chorismate biosynthesis; chorismate from D-erythrose 4-phosphate and phosphoenolpyruvate: step 4/7. Involved in the biosynthesis of the chorismate, which leads to the biosynthesis of aromatic amino acids. Catalyzes the reversible NADPH linked reduction of 3-dehydroshikimate (DHSA) to yield shikimate (SA). The chain is Shikimate dehydrogenase (NADP(+)) from Bartonella quintana (strain Toulouse) (Rochalimaea quintana).